Reading from the N-terminus, the 328-residue chain is Gonadotropin-releasing hormone receptor (328 aa).

At 1-38 the chain is on the extracellular side; that stretch reads MANSASPEQNQNHCSASNSSIPLTQANLPTLTLSGKIR. Asparagine 18 carries N-linked (GlcNAc...) asparagine glycosylation. A helical membrane pass occupies residues 39 to 59; sequence VTVTFFLFLLSTTFNASFLLK. Topologically, residues 60–84 are cytoplasmic; it reads LHKWTQKKENGKKLSKMKVLLKHLT. The chain crosses the membrane as a helical span at residues 85-105; sequence LANLLETLIVMPLDGMWNITV. Residues 106–115 are Extracellular-facing; sequence QWYAGELLCK. An intrachain disulfide couples cysteine 114 to cysteine 196. A helical membrane pass occupies residues 116-136; that stretch reads VLSYLKLFSMYAPAFMMVVIS. The Cytoplasmic segment spans residues 137–157; it reads LDRSLAITRPLAVKSNSKLGR. A helical transmembrane segment spans residues 158–178; it reads SMIGLAWLLSSIFAGPQLYIF. Residues 179–208 lie on the Extracellular side of the membrane; sequence RMIHLADSSGQTEGFSQCVTHCSFPQWWHQ. A helical transmembrane segment spans residues 209–229; that stretch reads AFYNFFTFSCLFIIPLLFMLI. Topologically, residues 230-271 are cytoplasmic; sequence CNAKIIFTLTRVLHQDPHKLQLNQSKNNIPRARLRTLKMTVA. Residues 272–292 form a helical membrane-spanning segment; sequence FATSFTVCWTPYYVLGIWYWF. The Extracellular portion of the chain corresponds to 293–306; that stretch reads DPEMLNRVSDPVNH. Residues 307–327 traverse the membrane as a helical segment; sequence FFFLFALLNPCFDPLIYGYFS. Position 328 (leucine 328) is a topological domain, cytoplasmic.

It belongs to the G-protein coupled receptor 1 family.

Its subcellular location is the cell membrane. Receptor for gonadotropin releasing hormone (GnRH) that mediates the action of GnRH to stimulate the secretion of the gonadotropic hormones luteinizing hormone (LH) and follicle-stimulating hormone (FSH). This receptor mediates its action by association with G-proteins that activate a phosphatidylinositol-calcium second messenger system. The protein is Gonadotropin-releasing hormone receptor (GNRHR) of Equus caballus (Horse).